The primary structure comprises 417 residues: Serine hydroxymethyltransferase (417 aa).

Residues Leu-121 and 125–127 contribute to the (6S)-5,6,7,8-tetrahydrofolate site; that span reads GHL. An N6-(pyridoxal phosphate)lysine modification is found at Lys-229. 355–357 lines the (6S)-5,6,7,8-tetrahydrofolate pocket; it reads SPF.

It belongs to the SHMT family. In terms of assembly, homodimer. Pyridoxal 5'-phosphate serves as cofactor.

Its subcellular location is the cytoplasm. It carries out the reaction (6R)-5,10-methylene-5,6,7,8-tetrahydrofolate + glycine + H2O = (6S)-5,6,7,8-tetrahydrofolate + L-serine. It functions in the pathway one-carbon metabolism; tetrahydrofolate interconversion. Its pathway is amino-acid biosynthesis; glycine biosynthesis; glycine from L-serine: step 1/1. Functionally, catalyzes the reversible interconversion of serine and glycine with tetrahydrofolate (THF) serving as the one-carbon carrier. This reaction serves as the major source of one-carbon groups required for the biosynthesis of purines, thymidylate, methionine, and other important biomolecules. Also exhibits THF-independent aldolase activity toward beta-hydroxyamino acids, producing glycine and aldehydes, via a retro-aldol mechanism. The protein is Serine hydroxymethyltransferase of Sodalis glossinidius (strain morsitans).